A 338-amino-acid polypeptide reads, in one-letter code: MKLLITGGCGFLGSNLASFALSQGIDLIVFDNLSRKGATDNLHWLSSLGNFEFVHGDIRNKNDVTRLITKYMPDSCFHLAGQVAMTTSIDNPCMDFEINVGGTLNLLEAVRQYNSNCNIIYSSTNKVYGDLEQYKYNETETRYTCVDKPNGYDESTQLDFHSPYGCSKGAADQYMLDYARIFGLNTVVFRHSSMYGGRQFATYDQGWVGWFCQKAVEIKNGINKPFTISGNGKQVRDVLHAEDMISLYFTALANVSKIRGNAFNIGGTIVNSLSLLELFKLLEDYCNIDMRFTNLPVRESDQRVFVADIKKITNAIDWSPKVSAKDGVQKMYDWTSSI.

Position 124 (threonine 124) interacts with substrate. Catalysis depends on tyrosine 164, which acts as the Proton acceptor.

This sequence belongs to the NAD(P)-dependent epimerase/dehydratase family. In terms of assembly, homotetramer. Requires NAD(+) as cofactor.

It carries out the reaction CDP-alpha-D-paratose = CDP-3,6-dideoxy-alpha-D-mannose. It participates in nucleotide-sugar biosynthesis; CDP-3,6-dideoxy-D-mannose biosynthesis; CDP-3,6-dideoxy-D-mannose from CTP and alpha-D-glucose 1-phosphate: step 5/5. Catalyzes the isomeration of CDP-paratose to CDP-tyvelose. This is CDP-paratose 2-epimerase (rfbE) from Salmonella typhi.